A 658-amino-acid polypeptide reads, in one-letter code: tRNA uridine 5-carboxymethylaminomethyl modification enzyme MnmG (658 aa).

An FAD-binding site is contributed by 13-18; it reads GAGHAG. 285 to 299 contacts NAD(+); it reads GPRYCPSVEDKINRF.

Belongs to the MnmG family. As to quaternary structure, homodimer. Heterotetramer of two MnmE and two MnmG subunits. The cofactor is FAD.

Its subcellular location is the cytoplasm. Functionally, NAD-binding protein involved in the addition of a carboxymethylaminomethyl (cmnm) group at the wobble position (U34) of certain tRNAs, forming tRNA-cmnm(5)s(2)U34. In Verminephrobacter eiseniae (strain EF01-2), this protein is tRNA uridine 5-carboxymethylaminomethyl modification enzyme MnmG.